We begin with the raw amino-acid sequence, 405 residues long: Arrestin red cell isoform 2 (405 aa).

This sequence belongs to the arrestin family.

The protein resides in the cytoplasm. This Oncorhynchus mykiss (Rainbow trout) protein is Arrestin red cell isoform 2.